We begin with the raw amino-acid sequence, 895 residues long: Procollagen lysyl hydroxylase and glycosyltransferase (895 aa).

The interval 1-194 (MISRTYVINL…PSDEFIPIMH (194 aa)) is lysyl hydroxylase region. The interval 537-895 (YYFYISGDCI…KRYILVSFVN (359 aa)) is glucosyl transferase region. Residues 805 to 895 (DINLAFVVKY…KRYILVSFVN (91 aa)) enclose the Fe2OG dioxygenase domain. Residues His-825, Asp-827, and His-877 each contribute to the Fe cation site. Arg-887 is a catalytic residue.

It depends on Fe cation as a cofactor. Requires L-ascorbate as cofactor.

The catalysed reaction is L-lysyl-[collagen] + 2-oxoglutarate + O2 = (5R)-5-hydroxy-L-lysyl-[collagen] + succinate + CO2. Its function is as follows. Displays two enzymatic activities involved in procollagen processing. Forms hydroxylysine residues in -Xaa-Lys-Gly- sequences in collagens. These hydroxylysines are subsequentially glucosylated by a glucosyltransferase activity. Collagen post-translationally modified is detected in mimivirus virion. This Acanthamoeba polyphaga (Amoeba) protein is Procollagen lysyl hydroxylase and glycosyltransferase.